The chain runs to 127 residues: Large ribosomal subunit protein uL24A (127 aa).

Belongs to the universal ribosomal protein uL24 family. Component of the large ribosomal subunit (LSU). Mature yeast ribosomes consist of a small (40S) and a large (60S) subunit. The 40S small subunit contains 1 molecule of ribosomal RNA (18S rRNA) and 33 different proteins (encoded by 57 genes). The large 60S subunit contains 3 rRNA molecules (25S, 5.8S and 5S rRNA) and 46 different proteins (encoded by 81 genes).

The protein resides in the cytoplasm. In terms of biological role, component of the ribosome, a large ribonucleoprotein complex responsible for the synthesis of proteins in the cell. The small ribosomal subunit (SSU) binds messenger RNAs (mRNAs) and translates the encoded message by selecting cognate aminoacyl-transfer RNA (tRNA) molecules. The large subunit (LSU) contains the ribosomal catalytic site termed the peptidyl transferase center (PTC), which catalyzes the formation of peptide bonds, thereby polymerizing the amino acids delivered by tRNAs into a polypeptide chain. The nascent polypeptides leave the ribosome through a tunnel in the LSU and interact with protein factors that function in enzymatic processing, targeting, and the membrane insertion of nascent chains at the exit of the ribosomal tunnel. This Saccharomyces cerevisiae (strain ATCC 204508 / S288c) (Baker's yeast) protein is Large ribosomal subunit protein uL24A.